The chain runs to 392 residues: Gastricsin (392 aa).

The N-terminal stretch at 1 to 16 (MKWMVVALLCLPLLEA) is a signal peptide. Residues 17–62 (ALIRVPLKKMKSIRETMKEQGVLKDFLKNHKYDPGQKYHFGKFGDY) constitute a propeptide, activation peptide. In terms of domain architecture, Peptidase A1 spans 76–389 (YYGEISIGTP…DMGNNRVGLA (314 aa)). The active site involves Asp-94. Intrachain disulfides connect Cys-107/Cys-112 and Cys-270/Cys-275. The active site involves Asp-280. Residues Cys-314 and Cys-347 are joined by a disulfide bond.

Belongs to the peptidase A1 family.

It localises to the secreted. It catalyses the reaction More restricted specificity than pepsin A, but shows preferential cleavage at Tyr-|-Xaa bonds. High activity on hemoglobin.. Its function is as follows. Hydrolyzes a variety of proteins. This chain is Gastricsin (Pgc), found in Mus musculus (Mouse).